Reading from the N-terminus, the 176-residue chain is Mitochondrial inner membrane protein Mpv17 (176 aa).

The next 4 membrane-spanning stretches (helical) occupy residues 18-38, 53-73, 94-114, and 131-151; these read VQVL…QQLV, TMVS…YKVL, GGFA…LNGM, and LITN…LVPL.

This sequence belongs to the peroxisomal membrane protein PXMP2/4 family. High levels in heart, kidney, and brain, intermediate levels in testis, and low levels in liver and spleen.

The protein localises to the mitochondrion inner membrane. Its function is as follows. Non-selective channel that modulates the membrane potential under normal conditions and oxidative stress, and is involved in mitochondrial homeostasis. Involved in mitochondrial deoxynucleoside triphosphates (dNTP) pool homeostasis and mitochondrial DNA (mtDNA) maintenance. May be involved in the regulation of reactive oxygen species metabolism and the control of oxidative phosphorylation. The sequence is that of Mitochondrial inner membrane protein Mpv17 from Mus musculus (Mouse).